Consider the following 242-residue polypeptide: Ribonuclease 3 (242 aa).

Positions 7 to 136 (LEALQNLLGY…LLASIYLDGG (130 aa)) constitute an RNase III domain. E49 is a binding site for Mg(2+). The active site involves D53. Positions 122 and 125 each coordinate Mg(2+). The active site involves E125. In terms of domain architecture, DRBM spans 167-236 (DYKTQLQELT…AEKALQIIAA (70 aa)).

It belongs to the ribonuclease III family. Homodimer. Mg(2+) is required as a cofactor.

It localises to the cytoplasm. It carries out the reaction Endonucleolytic cleavage to 5'-phosphomonoester.. Its function is as follows. Digests double-stranded RNA. Involved in the processing of primary rRNA transcript to yield the immediate precursors to the large and small rRNAs (23S and 16S). Processes some mRNAs, and tRNAs when they are encoded in the rRNA operon. Processes pre-crRNA and tracrRNA of type II CRISPR loci if present in the organism. The protein is Ribonuclease 3 of Syntrophobacter fumaroxidans (strain DSM 10017 / MPOB).